A 111-amino-acid chain; its full sequence is Estrogen receptor (111 aa).

The tract at residues 1–42 (PSGYAVREAGPPAYYRPNSDNRRQGGRERLASTSDKGSMAVE) is disordered. The tract at residues 1 to 49 (PSGYAVREAGPPAYYRPNSDNRRQGGRERLASTSDKGSMAVESAKETRY) is modulating. The span at 19-30 (SDNRRQGGRERL) shows a compositional bias: basic and acidic residues. Position 32 is a phosphoserine (Ser-32). 2 NR C4-type zinc fingers span residues 50–70 (CAVC…CEGC) and 86–110 (CPAT…LRKC). A DNA-binding region (nuclear receptor) is located at residues 50–111 (CAVCNDYASG…CQACRLRKCY (62 aa)).

It belongs to the nuclear hormone receptor family. NR3 subfamily. As to quaternary structure, binds DNA as a homodimer. Can form a heterodimer with ESR2. Interacts with coactivator NCOA5. Interacts with PELP1, the interaction is enhanced by 17-beta-estradiol; the interaction increases ESR1 transcriptional activity. Interacts with NCOA7; the interaction is ligand-inducible. Interacts with AKAP13, CUEDC2, HEXIM1, KDM5A, MAP1S, SMARD1, and UBE1C. Interacts with MUC1; the interaction is stimulated by 7 beta-estradiol (E2) and enhances ESR1-mediated transcription. Interacts with DNTTIP2, and UIMC1. Interacts with KMT2D/MLL2. Interacts with ATAD2; the interaction is enhanced by estradiol. Interacts with KIF18A and LDB1. Interacts with RLIM (via its C-terminus). Interacts with MACROD1. Interacts with SH2D4A and PLCG. Interacts with SH2D4A; the interaction blocks binding to PLCG and inhibits estrogen-induced cell proliferation. Interacts with DYNLL1. Interacts with CCDC62; the interaction requires estradiol and appears to enhance the transcription of target genes. Interacts with NR2C1; the interaction prevents homodimerization of ESR1 and suppresses its transcriptional activity and cell growth. Interacts with DNAAF4. Interacts with PRMT2. Interacts with RBFOX2. Interacts with EP300; the interaction is estrogen-dependent and enhanced by CITED1. Interacts with CITED1; the interaction is estrogen-dependent. Interacts with FAM120B, FOXL2, PHB2 and SLC30A9. Interacts with coactivators NCOA3 and NCOA6. Interacts with STK3/MST2 only in the presence of SAV1 and vice-versa. Binds to CSNK1D. Interacts with NCOA2; NCOA2 can interact with ESR1 AF-1 and AF-2 domains simultaneously and mediate their transcriptional synergy. Interacts with DDX5. Interacts with NCOA1; the interaction seems to require a self-association of N-terminal and C-terminal regions. Interacts with ZNF366, DDX17, NFKB1, RELA, SP1 and SP3. Interacts with NRIP1. Interacts with GPER1; the interaction occurs in an estrogen-dependent manner. Interacts with CLOCK and the interaction is stimulated by estrogen. Interacts with TRIP4 (ufmylated); estrogen dependent. Interacts with LMTK3; the interaction phosphorylates ESR1 (in vitro) and protects it against proteasomal degradation. Interacts with CCAR2 (via N-terminus) in a ligand-independent manner. Interacts with ZFHX3. Interacts with SFR1 in a ligand-dependent and -independent manner. Interacts with DCAF13, LATS1 and DCAF1; regulates ESR1 ubiquitination and ubiquitin-mediated proteasomal degradation. Interacts (via DNA-binding domain) with POU4F2 (C-terminus); this interaction increases the estrogen receptor ESR1 transcriptional activity in a DNA- and ligand 17-beta-estradiol-independent manner. Interacts with ESRRB isoform 1. Interacts with UBE3A and WBP2. Interacts with GTF2B. Interacts with RBM39. In the absence of hormonal ligand, interacts with TACC1. Interacts with PI3KR1 or PI3KR2 and PTK2/FAK1. Interacts with SRC. Interacts with BAG1; the interaction is promoted in the absence of estradiol (17-beta-estradiol/E2). Interacts with and ubiquitinated by STUB1; the interaction is promoted in the absence of estradiol (17-beta-estradiol/E2). Interacts with NEDD8. Ubiquitinated; regulated by LATS1 via DCAF1 it leads to ESR1 proteasomal degradation. Deubiquitinated by OTUB1. Ubiquitinated by STUB1/CHIP; in the CA1 hippocampal region following loss of endogenous circulating estradiol (17-beta-estradiol/E2). Ubiquitinated by UBR5, leading to its degradation: UBR5 specifically recognizes and binds ligand-bound ESR1 when it is not associated with coactivators (NCOAs). In presence of NCOAs, the UBR5-degron is not accessible, preventing its ubiquitination and degradation. In terms of processing, dimethylated by PRMT1. Demethylated by JMJD6. Post-translationally, palmitoylated by ZDHHC7 and ZDHHC21. This modification is required for plasma membrane targeting and for rapid intracellular signaling via ERK and AKT kinases and cAMP generation, but not for signaling mediated by the nuclear hormone receptor. Phosphorylated by cyclin A/CDK2 and CK1. Phosphorylation probably enhances transcriptional activity. Dephosphorylation by PPP5C inhibits its transactivation activity. Phosphorylated by LMTK3 (in vitro).

Its subcellular location is the nucleus. It localises to the cytoplasm. The protein localises to the golgi apparatus. It is found in the cell membrane. Nuclear hormone receptor. The steroid hormones and their receptors are involved in the regulation of eukaryotic gene expression and affect cellular proliferation and differentiation in target tissues. Ligand-dependent nuclear transactivation involves either direct homodimer binding to a palindromic estrogen response element (ERE) sequence or association with other DNA-binding transcription factors, such as AP-1/c-Jun, c-Fos, ATF-2, Sp1 and Sp3, to mediate ERE-independent signaling. Ligand binding induces a conformational change allowing subsequent or combinatorial association with multiprotein coactivator complexes through LXXLL motifs of their respective components. Mutual transrepression occurs between the estrogen receptor (ER) and NF-kappa-B in a cell-type specific manner. Decreases NF-kappa-B DNA-binding activity and inhibits NF-kappa-B-mediated transcription from the IL6 promoter and displace RELA/p65 and associated coregulators from the promoter. Recruited to the NF-kappa-B response element of the CCL2 and IL8 promoters and can displace CREBBP. Present with NF-kappa-B components RELA/p65 and NFKB1/p50 on ERE sequences. Can also act synergistically with NF-kappa-B to activate transcription involving respective recruitment adjacent response elements; the function involves CREBBP. Can activate the transcriptional activity of TFF1. Also mediates membrane-initiated estrogen signaling involving various kinase cascades. Essential for MTA1-mediated transcriptional regulation of BRCA1 and BCAS3. Maintains neuronal survival in response to ischemic reperfusion injury when in the presence of circulating estradiol (17-beta-estradiol/E2). The polypeptide is Estrogen receptor (ESR1) (Ovis aries (Sheep)).